The following is a 356-amino-acid chain: DNA polymerase IV (356 aa).

Positions 6–187 (IIHIDMDYFF…LDIGDFPGVG (182 aa)) constitute a UmuC domain. The Mg(2+) site is built by Asp10 and Asp105. Glu106 is an active-site residue.

The protein belongs to the DNA polymerase type-Y family. Monomer. Mg(2+) is required as a cofactor.

The protein resides in the cytoplasm. It catalyses the reaction DNA(n) + a 2'-deoxyribonucleoside 5'-triphosphate = DNA(n+1) + diphosphate. Functionally, poorly processive, error-prone DNA polymerase involved in untargeted mutagenesis. Copies undamaged DNA at stalled replication forks, which arise in vivo from mismatched or misaligned primer ends. These misaligned primers can be extended by PolIV. Exhibits no 3'-5' exonuclease (proofreading) activity. May be involved in translesional synthesis, in conjunction with the beta clamp from PolIII. This chain is DNA polymerase IV, found in Staphylococcus epidermidis (strain ATCC 12228 / FDA PCI 1200).